The chain runs to 605 residues: MLLKTSRRTFLKGLTLSGVAGSLGVWSFNARSSLSLPVAASLQGTQFDLTIGETAVNITGSERQAKTINGGLPGPVLRWKEGDTITLKVKNRLNEQTSIHWHGIILPANMDGVPGLSFMGIEPDDTYVYTFKVKQNGTYWYHSHSGLQEQEGVYGAIIIDAREPEPFAYDREHVVMLSDWTDENPHSLLKKLKKQSDYYNFNKPTVGSFFRDVNTRGLSATIADRKMWAEMKMNPTDLADVSGYTYTYLMNGQAPLKNWTGLFRPGEKIRLRFINGSAMTYFDIRIPGLKMTVVAADGQYVNPVTVDEFRIAVAETYDVIVEPQGEAYTIFAQSMDRTGYARGTLATREGLSAAVPPLDPRPLLTMEDMGMGGMGHDMAGMDHSQMGGMDNSGEMMSMDGADLPDSGTSSAPMDHSSMAGMDHSRMAGMPGMQSHPASETDNPLVDMQAMSVSPKLNDPGIGLRNNGRKVLTYADLKSRFEDPDGREPGRTIELHLTGHMEKFAWSFNGIKFSDAAPVLLKYGERLRITLINDTMMTHPIHLHGMWSDLEDENGNFMVRKHTIDVPPGTKRSYRVTADALGRWAYHCHLLYHMEMGMFREVRVEE.

The segment at residues 1 to 41 (MLLKTSRRTFLKGLTLSGVAGSLGVWSFNARSSLSLPVAAS) is a signal peptide (tat-type signal). Positions 100, 102, 142, and 144 each coordinate Cu cation. Repeat copies occupy residues 382–389 (DHSQMGGM), 414–421 (DHSSMAGM), and 422–429 (DHSRMAGM). The segment at 382-429 (DHSQMGGMDNSGEMMSMDGADLPDSGTSSAPMDHSSMAGMDHSRMAGM) is 3 X 8 AA tandem repeats of D-H-X-X-M-X-G-M. The Cu cation site is built by His538, His541, His543, His586, Cys587, His588, His592, and Met597.

Belongs to the multicopper oxidase family. CopA subfamily. In terms of processing, predicted to be exported by the Tat system. The position of the signal peptide cleavage has not been experimentally proven.

The protein localises to the periplasm. Required for the copper-inducible expression of copper resistance. May have oxidase activity. The chain is Copper resistance protein A (pcoA) from Escherichia coli.